The sequence spans 101 residues: Signal recognition particle 19 kDa protein (101 aa).

The protein belongs to the SRP19 family. Part of the signal recognition particle protein translocation system, which is composed of SRP and FtsY. Archaeal SRP consists of a 7S RNA molecule of 300 nucleotides and two protein subunits: SRP54 and SRP19.

It is found in the cytoplasm. Functionally, involved in targeting and insertion of nascent membrane proteins into the cytoplasmic membrane. Binds directly to 7S RNA and mediates binding of the 54 kDa subunit of the SRP. This is Signal recognition particle 19 kDa protein from Thermofilum pendens (strain DSM 2475 / Hrk 5).